The chain runs to 446 residues: Nuclear envelope integral membrane protein 1 (446 aa).

The signal sequence occupies residues 1-37 (MAGFMKYKSVSTTIETVRLKLILTAVLFLFPFSQTSG). N-linked (GlcNAc...) asparagine glycosylation is found at N62, N118, and N129. The next 5 membrane-spanning stretches (helical) occupy residues 154–174 (IYLFLVFLAGVLLFFYADVLS), 181–201 (YSAGMSTGMIASLLILIFIVY), 209–229 (PFYMLVVGGWSFSLYIIQLVF), 239–259 (HWHLAIGYVFVVGFISFAVCY), and 269–289 (SINILSWALQIFGLLLVYAGI). Residues 410–431 (LFSTDEEDKEEEEDGWETEDDI) show a composition bias toward acidic residues. The segment at 410–446 (LFSTDEEDKEEEEDGWETEDDIKPEVTSPRMNNTRGK) is disordered. N441 carries N-linked (GlcNAc...) asparagine glycosylation.

This sequence belongs to the NEMP family.

The protein localises to the nucleus inner membrane. Functionally, contributes to nuclear envelope stiffness in germ cells. Involved in male and female fertility. Essential for normal erythropoiesis. Required for efficient nuclear envelope opening and enucleation during the late stages of erythroblast maturation. The sequence is that of Nuclear envelope integral membrane protein 1 from Danio rerio (Zebrafish).